Here is a 121-residue protein sequence, read N- to C-terminus: Ribonuclease P protein component 4 (121 aa).

4 residues coordinate Zn(2+): Cys-63, Cys-66, Cys-89, and Cys-92.

The protein belongs to the eukaryotic/archaeal RNase P protein component 4 family. In terms of assembly, consists of a catalytic RNA component and at least 4-5 protein subunits. It depends on Zn(2+) as a cofactor.

Its subcellular location is the cytoplasm. It carries out the reaction Endonucleolytic cleavage of RNA, removing 5'-extranucleotides from tRNA precursor.. Functionally, part of ribonuclease P, a protein complex that generates mature tRNA molecules by cleaving their 5'-ends. The protein is Ribonuclease P protein component 4 of Methanobrevibacter smithii (strain ATCC 35061 / DSM 861 / OCM 144 / PS).